We begin with the raw amino-acid sequence, 141 residues long: Hemoglobin subunit alpha (141 aa).

In terms of domain architecture, Globin spans Val1 to Arg141. Ser3 carries the phosphoserine modification. Residue Lys7 is modified to N6-succinyllysine. Thr8 bears the Phosphothreonine mark. The residue at position 11 (Lys11) is an N6-succinyllysine. An N6-acetyllysine; alternate modification is found at Lys16. N6-succinyllysine; alternate is present on Lys16. Residue Tyr24 is modified to Phosphotyrosine. Ser35 carries the post-translational modification Phosphoserine. Lys40 bears the N6-succinyllysine mark. Phosphoserine is present on Ser49. His58 lines the O2 pocket. His87 provides a ligand contact to heme b. Residue Ser102 is modified to Phosphoserine. Residue Thr108 is modified to Phosphothreonine. Ser124 and Ser131 each carry phosphoserine. 2 positions are modified to phosphothreonine: Thr134 and Thr137. A Phosphoserine modification is found at Ser138.

This sequence belongs to the globin family. In terms of assembly, heterotetramer of two alpha chains and two beta chains. In terms of tissue distribution, red blood cells.

In terms of biological role, involved in oxygen transport from the lung to the various peripheral tissues. Hemopressin acts as an antagonist peptide of the cannabinoid receptor CNR1. Hemopressin-binding efficiently blocks cannabinoid receptor CNR1 and subsequent signaling. This chain is Hemoglobin subunit alpha (HBA), found in Cebus capucinus (White-faced sapajou).